The sequence spans 688 residues: Sciellin (688 aa).

Residues 1–25 show a composition bias toward polar residues; it reads MSNVTLRKMSPTGNEMKSTTQGTTR. The disordered stretch occupies residues 1 to 29; that stretch reads MSNVTLRKMSPTGNEMKSTTQGTTRKQQD. N6-acetyllysine is present on Lys83. Positions 134 to 231 are disordered; that stretch reads QPGGSLNANT…TNRSAERNIR (98 aa). Low complexity predominate over residues 140 to 154; the sequence is NANTSNTIASTSATT. Over residues 186-195 the composition is skewed to pro residues; sequence VHPPIPPKPS. A run of 16 repeats spans residues 251-266, 267-286, 287-306, 307-326, 327-346, 347-366, 367-386, 387-406, 407-426, 427-446, 447-465, 466-484, 485-504, 505-523, 524-543, and 544-563. The interval 251–563 is 16 X approximate tandem repeats; that stretch reads GEELDNLIKM…NSHVSENKNG (313 aa). Ser289 bears the Phosphoserine mark. Positions 340-373 are disordered; the sequence is MNKTSRRSEDLDNATEVNPKGHENTTGKKDLDGL. Residues 358-373 are compositionally biased toward basic and acidic residues; that stretch reads PKGHENTTGKKDLDGL. Phosphoserine is present on Ser389. An LIM zinc-binding domain is found at 619–685; the sequence is DMCTYCRKPL…EPCYSKIMAK (67 aa).

As to expression, highly expressed in esophagus. It is also expressed in keratinocytes, amniotic tissue, foreskin stratum spinosum and stratum granulosum, hair follicle and nail.

The protein localises to the cytoplasm. The protein resides in the membrane. Its function is as follows. May function in the assembly or regulation of proteins in the cornified envelope. The LIM domain may be involved in homotypic or heterotypic associations and may function to localize sciellin to the cornified envelope. The protein is Sciellin (SCEL) of Homo sapiens (Human).